A 428-amino-acid chain; its full sequence is Mitochondrial import inner membrane translocase subunit TIM50-C (428 aa).

A helical transmembrane segment spans residues 59-79 (LFTCTALPAAAPALFSILHTA). Topologically, residues 80–428 (RGYSSTTKQE…KQWSRNILGR (349 aa)) are mitochondrial intermembrane. The segment at 112–138 (FPQTSPEVDSNAEQERKKREEEEEKEN) is disordered. The segment covering 124 to 138 (EQERKKREEEEEKEN) has biased composition (basic and acidic residues). Residues 224–367 (YVQPRYTLVL…LDLIAFLKII (144 aa)) enclose the FCP1 homology domain.

This sequence belongs to the TIM50 family. As to quaternary structure, component of the TIM23 complex at least composed of Tim23, Tim17 (Tim17a1, Tim17a2 or Tim17b1) and a Tim50.

It localises to the mitochondrion inner membrane. Its function is as follows. Essential component of the TIM23 complex, a complex that mediates the translocation of transit peptide-containing proteins across the mitochondrial inner membrane. This Drosophila melanogaster (Fruit fly) protein is Mitochondrial import inner membrane translocase subunit TIM50-C (ttm50).